The following is a 614-amino-acid chain: Glucosidase 2 subunit beta (614 aa).

A signal peptide spans 1-19 (MGLHAILLLLLLRISASAA). Residue N115 is glycosylated (N-linked (GlcNAc...) asparagine). Composition is skewed to basic and acidic residues over residues 194–222 (EEER…KKAS), 231–272 (QENH…HDPE), and 324–351 (TGEK…HSEE). The segment at 194 to 396 (EEERLRKEKE…SHESDDEYVD (203 aa)) is disordered. Acidic residues predominate over residues 352–364 (THEDESDVPESAE). The segment covering 372-382 (SEVEDDRHKYD) has biased composition (basic and acidic residues). Over residues 383–396 (DEDFSHESDDEYVD) the composition is skewed to acidic residues. One can recognise an MRH domain in the interval 497–592 (DQCFESKEGK…VLSTPALCDE (96 aa)). 3 disulfide bridges follow: C499/C512, C549/C578, and C563/C590.

As to quaternary structure, heterodimer of a catalytic alpha subunit and a beta subunit.

The protein resides in the endoplasmic reticulum. It functions in the pathway glycan metabolism; N-glycan metabolism. Functionally, regulatory subunit of glucosidase II. May be required for defense response elicited by pathogen-associated molecular patterns (PAMPs). In Oryza sativa subsp. japonica (Rice), this protein is Glucosidase 2 subunit beta.